The following is a 120-amino-acid chain: Spermidine export protein MdtJ (120 aa).

Helical transmembrane passes span 1–21 (MFYW…TLSM), 31–51 (AGYI…SFAV), 54–74 (IALG…ITVF), and 81–101 (EVLS…IVLI).

It belongs to the drug/metabolite transporter (DMT) superfamily. Small multidrug resistance (SMR) (TC 2.A.7.1) family. MdtJ subfamily. In terms of assembly, forms a complex with MdtI.

It is found in the cell inner membrane. Its function is as follows. Catalyzes the excretion of spermidine. This Salmonella arizonae (strain ATCC BAA-731 / CDC346-86 / RSK2980) protein is Spermidine export protein MdtJ.